Here is a 279-residue protein sequence, read N- to C-terminus: Small ribosomal subunit protein uS9m (279 aa).

It belongs to the universal ribosomal protein uS9 family.

The protein localises to the mitochondrion. This Eremothecium gossypii (strain ATCC 10895 / CBS 109.51 / FGSC 9923 / NRRL Y-1056) (Yeast) protein is Small ribosomal subunit protein uS9m (MRPS9).